Consider the following 279-residue polypeptide: Probable endonuclease 4 (279 aa).

The Zn(2+) site is built by His-69, His-109, Glu-145, Asp-179, His-182, His-216, Asp-229, His-231, and Glu-261.

The protein belongs to the AP endonuclease 2 family. The cofactor is Zn(2+).

The enzyme catalyses Endonucleolytic cleavage to 5'-phosphooligonucleotide end-products.. In terms of biological role, endonuclease IV plays a role in DNA repair. It cleaves phosphodiester bonds at apurinic or apyrimidinic (AP) sites, generating a 3'-hydroxyl group and a 5'-terminal sugar phosphate. The chain is Probable endonuclease 4 from Tolumonas auensis (strain DSM 9187 / NBRC 110442 / TA 4).